A 231-amino-acid chain; its full sequence is 7-cyano-7-deazaguanine synthase (231 aa).

8-18 (FSGGQDSTTCL) contributes to the ATP binding site. Residues Cys-188, Cys-197, Cys-200, and Cys-203 each contribute to the Zn(2+) site.

The protein belongs to the QueC family. Zn(2+) serves as cofactor.

The catalysed reaction is 7-carboxy-7-deazaguanine + NH4(+) + ATP = 7-cyano-7-deazaguanine + ADP + phosphate + H2O + H(+). Its pathway is purine metabolism; 7-cyano-7-deazaguanine biosynthesis. Catalyzes the ATP-dependent conversion of 7-carboxy-7-deazaguanine (CDG) to 7-cyano-7-deazaguanine (preQ(0)). This is 7-cyano-7-deazaguanine synthase from Shigella flexneri serotype 5b (strain 8401).